Reading from the N-terminus, the 747-residue chain is E3 UFM1-protein ligase 1 homolog (747 aa).

The tract at residues 403–468 (EKKKQCGSKA…GTVQVNSEEL (66 aa)) is disordered. The span at 429-438 (GGKGGKKGGK) shows a compositional bias: basic residues. A compositionally biased stretch (gly residues) spans 439 to 449 (GGKNGGGGGKG). Residues 450–465 (ATSSVPTGSGTVQVNS) show a composition bias toward polar residues.

The protein belongs to the UFL1 family.

In terms of biological role, E3 UFM1-protein ligase that mediates ufmylation of target proteins. The chain is E3 UFM1-protein ligase 1 homolog (ufl-1) from Caenorhabditis briggsae.